Reading from the N-terminus, the 333-residue chain is Ketol-acid reductoisomerase (NADP(+)) (333 aa).

The KARI N-terminal Rossmann domain occupies 1–179; sequence MFYDDDADLT…GGTRAGVIKT (179 aa). NADP(+) is bound by residues 22 to 25, K45, S48, S50, and 80 to 83; these read YGSQ and DTAQ. The active site involves H105. An NADP(+)-binding site is contributed by G131. The 146-residue stretch at 180–325 folds into the KARI C-terminal knotted domain; that stretch reads TFKDETETDL…KRLRDLMSWV (146 aa). Mg(2+) contacts are provided by D188, E192, E224, and E228. S249 lines the substrate pocket.

This sequence belongs to the ketol-acid reductoisomerase family. The cofactor is Mg(2+).

The catalysed reaction is (2R)-2,3-dihydroxy-3-methylbutanoate + NADP(+) = (2S)-2-acetolactate + NADPH + H(+). The enzyme catalyses (2R,3R)-2,3-dihydroxy-3-methylpentanoate + NADP(+) = (S)-2-ethyl-2-hydroxy-3-oxobutanoate + NADPH + H(+). Its pathway is amino-acid biosynthesis; L-isoleucine biosynthesis; L-isoleucine from 2-oxobutanoate: step 2/4. The protein operates within amino-acid biosynthesis; L-valine biosynthesis; L-valine from pyruvate: step 2/4. Functionally, involved in the biosynthesis of branched-chain amino acids (BCAA). Catalyzes an alkyl-migration followed by a ketol-acid reduction of (S)-2-acetolactate (S2AL) to yield (R)-2,3-dihydroxy-isovalerate. In the isomerase reaction, S2AL is rearranged via a Mg-dependent methyl migration to produce 3-hydroxy-3-methyl-2-ketobutyrate (HMKB). In the reductase reaction, this 2-ketoacid undergoes a metal-dependent reduction by NADPH to yield (R)-2,3-dihydroxy-isovalerate. This is Ketol-acid reductoisomerase (NADP(+)) from Mycobacterium avium.